The primary structure comprises 186 residues: Tumor necrosis factor alpha-induced protein 8-like protein 2 (186 aa).

It belongs to the TNFAIP8 family. TNFAIP8L2 subfamily.

Acts as a negative regulator of innate and adaptive immunity by maintaining immune homeostasis. Negative regulator of Toll-like receptor and T-cell receptor function. Prevents hyperresponsiveness of the immune system and maintains immune homeostasis. Inhibits jun/ap1 and NF-kappa-B activation. Promotes Fas-induced apoptosis. The protein is Tumor necrosis factor alpha-induced protein 8-like protein 2 (tnfaip8l2) of Xenopus laevis (African clawed frog).